The following is a 392-amino-acid chain: GTPase Obg (392 aa).

The Obg domain occupies 1 to 159 (MKFVDEATIL…RDLQLELMLL (159 aa)). The disordered stretch occupies residues 127–146 (NTRFKSSVNRTPRQKTMGTP). The segment covering 129-143 (RFKSSVNRTPRQKTM) has biased composition (polar residues). In terms of domain architecture, OBG-type G spans 160–333 (ADVGMLGLPN…LCWDVMAFIK (174 aa)). Residues 166 to 173 (GLPNAGKS), 191 to 195 (FTTLV), 213 to 216 (DIPG), 283 to 286 (NKVD), and 314 to 316 (SAA) contribute to the GTP site. Positions 173 and 193 each coordinate Mg(2+). The tract at residues 360-392 (QLEEAQPEVEEDDDWDDDWDEDDEEGVETIYQR) is disordered. Residues 364-386 (AQPEVEEDDDWDDDWDEDDEEGV) show a composition bias toward acidic residues.

The protein belongs to the TRAFAC class OBG-HflX-like GTPase superfamily. OBG GTPase family. Monomer. Mg(2+) serves as cofactor.

Its subcellular location is the cytoplasm. In terms of biological role, an essential GTPase which binds GTP, GDP and possibly (p)ppGpp with moderate affinity, with high nucleotide exchange rates and a fairly low GTP hydrolysis rate. Plays a role in control of the cell cycle, stress response, ribosome biogenesis and in those bacteria that undergo differentiation, in morphogenesis control. The sequence is that of GTPase Obg from Erwinia tasmaniensis (strain DSM 17950 / CFBP 7177 / CIP 109463 / NCPPB 4357 / Et1/99).